We begin with the raw amino-acid sequence, 590 residues long: UvrABC system protein C (590 aa).

The GIY-YIG domain maps to 14–91 (DQPGCYLMKD…IKKYDPKYNV (78 aa)). Positions 196 to 231 (NEVKKELEAKMLEASENLQFERAKEFRDQIAHIEST) constitute a UVR domain.

The protein belongs to the UvrC family. In terms of assembly, interacts with UvrB in an incision complex.

It is found in the cytoplasm. In terms of biological role, the UvrABC repair system catalyzes the recognition and processing of DNA lesions. UvrC both incises the 5' and 3' sides of the lesion. The N-terminal half is responsible for the 3' incision and the C-terminal half is responsible for the 5' incision. In Bacillus licheniformis (strain ATCC 14580 / DSM 13 / JCM 2505 / CCUG 7422 / NBRC 12200 / NCIMB 9375 / NCTC 10341 / NRRL NRS-1264 / Gibson 46), this protein is UvrABC system protein C.